A 609-amino-acid polypeptide reads, in one-letter code: UvrABC system protein C (609 aa).

A GIY-YIG domain is found at 15-92 (TGSGVYQIQD…IKQFRPRYNV (78 aa)). In terms of domain architecture, UVR spans 202-237 (DQVIIKLTERMEVASENLVFEEAAHYRDQIRQLRRL).

This sequence belongs to the UvrC family. As to quaternary structure, interacts with UvrB in an incision complex.

The protein localises to the cytoplasm. Functionally, the UvrABC repair system catalyzes the recognition and processing of DNA lesions. UvrC both incises the 5' and 3' sides of the lesion. The N-terminal half is responsible for the 3' incision and the C-terminal half is responsible for the 5' incision. The chain is UvrABC system protein C from Coxiella burnetii (strain Dugway 5J108-111).